A 717-amino-acid polypeptide reads, in one-letter code: Aryl hydrocarbon receptor nuclear translocator 2 (717 aa).

Disordered regions lie at residues 1-20 and 35-74; these read MATPAAVNPPEMASDIPGSV and MAGAMPARGGKRRSGMDFDDEDGEGPSKFSRENHSEIERR. An Omega-N-methylarginine modification is found at Arg-42. Residues 63 to 73 show a composition bias toward basic and acidic residues; the sequence is FSRENHSEIER. The region spanning 63–116 is the bHLH domain; it reads FSRENHSEIERRRRNKMTQYITELSDMVPTCSALARKPDKLTILRMAVSHMKSM. PAS domains lie at 134–209 and 323–393; these read TEQE…MTGR and PVCM…VKLK. Positions 398–441 constitute a PAC domain; that stretch reads SVMYRFRTKNREWMLIRTSSFTFQNPYSDEIEYIICTNTNVKQL. The segment at 548–717 is disordered; the sequence is NDIQSSSSTG…DLGMFPPFSE (170 aa). 2 stretches are compositionally biased toward polar residues: residues 549–574 and 585–605; these read DIQSSSSTGQNMSQISRQLNQSQVAW and QIPSQSSKTQSSPFGIGTSHT. Positions 610–625 are enriched in low complexity; that stretch reads PSSYSPLSSPATSSPS. The span at 642 to 651 shows a compositional bias: polar residues; it reads SGQSSGQFQG. Low complexity predominate over residues 658–680; it reads SQWQSQHHGQQSGEQHSHQQPGQ.

As to quaternary structure, efficient DNA binding requires dimerization with another bHLH protein. Heterodimer with NPAS4. Heterodimer with SIM1. Heterodimer with the aryl hydrocarbon receptor (AHR) or the SIM1 protein. Interacts with TACC3.

Its subcellular location is the nucleus. In terms of biological role, transcription factor that plays a role in the development of the hypothalamo-pituitary axis, postnatal brain growth, and visual and renal function. Specifically recognizes the xenobiotic response element (XRE). The protein is Aryl hydrocarbon receptor nuclear translocator 2 (ARNT2) of Homo sapiens (Human).